The chain runs to 152 residues: Methylglyoxal synthase (152 aa).

Residues 1-152 (MELTTRTIAA…YDRYLQQRLK (152 aa)) form the MGS-like domain. Residues His-19, Lys-23, 45–48 (TGTT), and 65–66 (SG) contribute to the substrate site. The active-site Proton donor/acceptor is the Asp-71. Substrate is bound at residue His-98.

This sequence belongs to the methylglyoxal synthase family.

It carries out the reaction dihydroxyacetone phosphate = methylglyoxal + phosphate. Its function is as follows. Catalyzes the formation of methylglyoxal from dihydroxyacetone phosphate. This chain is Methylglyoxal synthase, found in Yersinia enterocolitica serotype O:8 / biotype 1B (strain NCTC 13174 / 8081).